Reading from the N-terminus, the 275-residue chain is Pantothenate synthetase (275 aa).

26–33 (MGFLHEGH) lines the ATP pocket. The active-site Proton donor is the His33. Gln57 lines the (R)-pantoate pocket. Residue Gln57 coordinates beta-alanine. 143–146 (GQKD) contributes to the ATP binding site. Gln149 contributes to the (R)-pantoate binding site. ATP contacts are provided by residues Ala172 and 180–183 (RSSR).

This sequence belongs to the pantothenate synthetase family. As to quaternary structure, homodimer.

The protein localises to the cytoplasm. The catalysed reaction is (R)-pantoate + beta-alanine + ATP = (R)-pantothenate + AMP + diphosphate + H(+). The protein operates within cofactor biosynthesis; (R)-pantothenate biosynthesis; (R)-pantothenate from (R)-pantoate and beta-alanine: step 1/1. Functionally, catalyzes the condensation of pantoate with beta-alanine in an ATP-dependent reaction via a pantoyl-adenylate intermediate. In Gluconobacter oxydans (strain 621H) (Gluconobacter suboxydans), this protein is Pantothenate synthetase.